The sequence spans 205 residues: Pyridoxine/pyridoxamine 5'-phosphate oxidase (205 aa).

FMN contacts are provided by residues 53–58, 68–69, K75, and Q97; these read RMVLLK and YT. K58 contributes to the substrate binding site. The substrate site is built by Y115, R119, and S123. FMN-binding positions include 132 to 133 and W177; that span reads QS. Position 183 to 185 (183 to 185) interacts with substrate; it reads RLH. Residue R187 coordinates FMN.

The protein belongs to the pyridoxamine 5'-phosphate oxidase family. In terms of assembly, homodimer. FMN serves as cofactor.

The enzyme catalyses pyridoxamine 5'-phosphate + O2 + H2O = pyridoxal 5'-phosphate + H2O2 + NH4(+). It carries out the reaction pyridoxine 5'-phosphate + O2 = pyridoxal 5'-phosphate + H2O2. The protein operates within cofactor metabolism; pyridoxal 5'-phosphate salvage; pyridoxal 5'-phosphate from pyridoxamine 5'-phosphate: step 1/1. It participates in cofactor metabolism; pyridoxal 5'-phosphate salvage; pyridoxal 5'-phosphate from pyridoxine 5'-phosphate: step 1/1. In terms of biological role, catalyzes the oxidation of either pyridoxine 5'-phosphate (PNP) or pyridoxamine 5'-phosphate (PMP) into pyridoxal 5'-phosphate (PLP). This is Pyridoxine/pyridoxamine 5'-phosphate oxidase from Mesorhizobium japonicum (strain LMG 29417 / CECT 9101 / MAFF 303099) (Mesorhizobium loti (strain MAFF 303099)).